The primary structure comprises 468 residues: Gasdermin-C (468 aa).

A triggers pyroptosis region spans residues 1–230; that stretch reads MSYTFDWLSK…CVILTSANTK (230 aa).

Belongs to the gasdermin family. In terms of assembly, homooligomer; homooligomeric ring-shaped pore complex containing 27-28 subunits when inserted in the membrane. Cleavage by CASP8 relieves autoinhibition by releasing the N-terminal moiety (Gasdermin-C, N-terminal) that initiates pyroptosis. Post-translationally, palmitoylated.

It localises to the cytoplasm. The protein localises to the cytosol. Its subcellular location is the cell membrane. With respect to regulation, the full-length protein before cleavage is inactive: intramolecular interactions between N- and C-terminal domains mediate autoinhibition in the absence of activation signal. The intrinsic pyroptosis-inducing activity is carried by the released N-terminal moiety (Gasdermin-C, N-terminal) following cleavage by caspase CASP8. Functionally, this form constitutes the precursor of the pore-forming protein: upon cleavage, the released N-terminal moiety (Gasdermin-C, N-terminal) binds to membranes and forms pores, triggering pyroptosis. In terms of biological role, pore-forming protein that causes membrane permeabilization and pyroptosis. Produced by the cleavage of gasdermin-C by caspase CASP8 in response to death signals. After cleavage, moves to the plasma membrane where it strongly binds to membrane inner leaflet lipids. Homooligomerizes within the membrane and forms pores of 10-15 nanometers (nm) of inner diameter, triggering pyroptosis. The sequence is that of Gasdermin-C from Mus musculus (Mouse).